A 345-amino-acid chain; its full sequence is 3-dehydroquinate synthase (345 aa).

Residues 62-67, 96-100, 120-121, lysine 133, lysine 142, and 160-163 each bind NAD(+); these read DGEEYK, GVISD, TT, and FLKT. Zn(2+) contacts are provided by glutamate 175, histidine 233, and histidine 250.

Belongs to the sugar phosphate cyclases superfamily. Dehydroquinate synthase family. It depends on Co(2+) as a cofactor. Zn(2+) serves as cofactor. NAD(+) is required as a cofactor.

It localises to the cytoplasm. The enzyme catalyses 7-phospho-2-dehydro-3-deoxy-D-arabino-heptonate = 3-dehydroquinate + phosphate. It functions in the pathway metabolic intermediate biosynthesis; chorismate biosynthesis; chorismate from D-erythrose 4-phosphate and phosphoenolpyruvate: step 2/7. Its function is as follows. Catalyzes the conversion of 3-deoxy-D-arabino-heptulosonate 7-phosphate (DAHP) to dehydroquinate (DHQ). The protein is 3-dehydroquinate synthase of Campylobacter concisus (strain 13826).